A 62-amino-acid polypeptide reads, in one-letter code: Large ribosomal subunit protein eL37 (62 aa).

Positions 20, 23, 35, and 38 each coordinate Zn(2+). The segment at 20–38 adopts a C4-type zinc-finger fold; sequence CRRCGRKAFNVKKGYCAAC.

It belongs to the eukaryotic ribosomal protein eL37 family. Zn(2+) serves as cofactor.

Binds to the 23S rRNA. In Pyrococcus abyssi (strain GE5 / Orsay), this protein is Large ribosomal subunit protein eL37 (rpl37e).